We begin with the raw amino-acid sequence, 478 residues long: Endoglucanase 18 (478 aa).

Positions 1–21 (MGKLLVVMLIGMFLAFESLEA) are cleaved as a signal peptide. N29 is a glycosylation site (N-linked (GlcNAc...) asparagine). Residue D76 is the Nucleophile of the active site. H398 is a catalytic residue. The interval 433-452 (HTGAIVGGPNSSDQYSDKRT) is disordered. N442 carries N-linked (GlcNAc...) asparagine glycosylation. Catalysis depends on residues D449 and E458.

The protein belongs to the glycosyl hydrolase 9 (cellulase E) family.

The protein resides in the secreted. The catalysed reaction is Endohydrolysis of (1-&gt;4)-beta-D-glucosidic linkages in cellulose, lichenin and cereal beta-D-glucans.. The chain is Endoglucanase 18 from Arabidopsis thaliana (Mouse-ear cress).